The primary structure comprises 204 residues: MSNFTAKVPLSERMADVLISKDRWKDDEEGYLKVKYGLEIILINVMKFALVYGIALVTGLLLQTVTVHLSYLWLRRYSFGLHATKTLNCTLISLMMFVLAPFVFQNVPSNNWIVLGTFAFILLNMFLFAPADTESLPLIGEEHRKTLKRKAMIGTLILTGIALLIPFAEMKTLIMIGSLFQVISINPLTYKLLRRRYRNYEKYE.

A run of 4 helical transmembrane segments spans residues 52–74, 87–107, 111–131, and 156–176; these read YGIA…YLWL, LNCT…FQNV, NWIV…FAPA, and LILT…LIMI.

This sequence belongs to the AgrB family.

It localises to the cell membrane. In terms of biological role, may be involved in the proteolytic processing of a quorum sensing system signal molecule precursor. This is Putative AgrB-like protein from Listeria monocytogenes serotype 4a (strain HCC23).